Reading from the N-terminus, the 225-residue chain is Cytidylate kinase (225 aa).

12-20 (GPSGAGKGT) serves as a coordination point for ATP.

It belongs to the cytidylate kinase family. Type 1 subfamily.

It is found in the cytoplasm. It catalyses the reaction CMP + ATP = CDP + ADP. The catalysed reaction is dCMP + ATP = dCDP + ADP. The chain is Cytidylate kinase from Pectobacterium atrosepticum (strain SCRI 1043 / ATCC BAA-672) (Erwinia carotovora subsp. atroseptica).